The chain runs to 85 residues: Antifungal protein (85 aa).

Residues 1-18 form the signal peptide; the sequence is MVKLFVIVILALIAVAFG. A run of 2 repeats spans residues 19–25 and 67–73. The 2 X 7 AA repeats of Q-H-G-H-G-G-Q stretch occupies residues 19-73; the sequence is QHGHGGQDQHGYGHGQQAVYGKGHEGHGVNNLGQDGHGQHGYAHGHSDQHGHGGQ. A compositionally biased stretch (gly residues) spans 22 to 32; sequence HGGQDQHGYGH. The interval 22-85 is disordered; the sequence is HGGQDQHGYG…QHDGYKNRGY (64 aa). Positions 63–85 are enriched in basic and acidic residues; that stretch reads GHSDQHGHGGQHGQHDGYKNRGY.

Homodimer. The N-terminus is blocked. As to expression, hemolymph.

Its function is as follows. This protein inhibits the growth of a variety of fungal species. The antifungal activity of this protein is enhanced by the presence of sarcotoxin IA. The protein is Antifungal protein of Sarcophaga peregrina (Flesh fly).